The sequence spans 91 residues: DNA-directed RNA polymerase subunit omega (91 aa).

Belongs to the RNA polymerase subunit omega family. As to quaternary structure, the RNAP catalytic core consists of 2 alpha, 1 beta, 1 beta' and 1 omega subunit. When a sigma factor is associated with the core the holoenzyme is formed, which can initiate transcription.

It carries out the reaction RNA(n) + a ribonucleoside 5'-triphosphate = RNA(n+1) + diphosphate. Functionally, promotes RNA polymerase assembly. Latches the N- and C-terminal regions of the beta' subunit thereby facilitating its interaction with the beta and alpha subunits. The protein is DNA-directed RNA polymerase subunit omega of Pectobacterium atrosepticum (strain SCRI 1043 / ATCC BAA-672) (Erwinia carotovora subsp. atroseptica).